We begin with the raw amino-acid sequence, 269 residues long: 3-methyl-2-oxobutanoate hydroxymethyltransferase (269 aa).

Mg(2+) is bound by residues Asp43 and Asp82. 3-methyl-2-oxobutanoate is bound by residues 43 to 44, Asp82, and Lys110; that span reads DS. Glu112 serves as a coordination point for Mg(2+). The active-site Proton acceptor is the Glu179.

It belongs to the PanB family. In terms of assembly, homodecamer; pentamer of dimers. Mg(2+) serves as cofactor.

Its subcellular location is the cytoplasm. The enzyme catalyses 3-methyl-2-oxobutanoate + (6R)-5,10-methylene-5,6,7,8-tetrahydrofolate + H2O = 2-dehydropantoate + (6S)-5,6,7,8-tetrahydrofolate. Its pathway is cofactor biosynthesis; (R)-pantothenate biosynthesis; (R)-pantoate from 3-methyl-2-oxobutanoate: step 1/2. Catalyzes the reversible reaction in which hydroxymethyl group from 5,10-methylenetetrahydrofolate is transferred onto alpha-ketoisovalerate to form ketopantoate. The sequence is that of 3-methyl-2-oxobutanoate hydroxymethyltransferase from Acinetobacter baumannii (strain AB307-0294).